Reading from the N-terminus, the 357-residue chain is Leucoanthocyanidin dioxygenase (357 aa).

The Fe2OG dioxygenase domain occupies L212–P311. H236, D238, and H292 together coordinate Fe cation.

Belongs to the iron/ascorbate-dependent oxidoreductase family. Requires Fe cation as cofactor. The cofactor is L-ascorbate.

The enzyme catalyses a (2R,3S,4S)-leucoanthocyanidin + 2-oxoglutarate + O2 = a 4-H-anthocyanidin with a 3-hydroxy group + succinate + CO2 + 2 H2O. It participates in pigment biosynthesis; anthocyanin biosynthesis. Its function is as follows. Oxidation of leucoanthocyanidins into anthocyanidins. This Malus domestica (Apple) protein is Leucoanthocyanidin dioxygenase (ANS).